The sequence spans 374 residues: GDSL esterase/lipase At3g50400 (374 aa).

The signal sequence occupies residues 1-26 (MKKSIFFVPVLVLFFFGSRFSRVASA). Residue Ser-41 is the Nucleophile of the active site. N-linked (GlcNAc...) asparagine glycans are attached at residues Asn-104 and Asn-125. Active-site residues include Asp-339 and His-342.

It belongs to the 'GDSL' lipolytic enzyme family.

The protein localises to the secreted. The protein is GDSL esterase/lipase At3g50400 of Arabidopsis thaliana (Mouse-ear cress).